A 471-amino-acid polypeptide reads, in one-letter code: Acetylcholinesterase collagenic tail peptide (471 aa).

The signal sequence occupies residues 1 to 30 (MLGILLQKATATLASGLNSSRAGMFPIALG). The PRAD stretch occupies residues 70 to 86 (CCLLTPPPPPMFPPPFF). Collagen-like domains are found at residues 118–282 (GPPG…SGLP) and 293–307 (GPKG…VGRC). 2 disordered regions span residues 140–205 (EIGE…GEKG) and 237–267 (KGVS…IGPP). Low complexity-rich tracts occupy residues 155 to 164 (VRGPRGMPGS) and 242 to 251 (APGHRGPVGR). 2 consecutive repeat copies span residues 388 to 413 (FCGD…TDSC) and 420 to 443 (YCGD…YHTC). A 2 X 26 AA approximate repeats region spans residues 388–443 (FCGDEIVQVENGEECDDGNRIVTDSCINCKQAYCGDGYLQSGLEECDGKDFGYHTC).

The protein belongs to the COLQ family. As to quaternary structure, the asymmetric form of AChE is a disulfide-bonded oligomer composed of a collagenic subunit (Q) and a variable number of asymmetric (T) catalytic subunits. The N-terminal of the collagenic subunit (Q) associates with the C-terminal of the catalytic subunit (T). Expressed in electric organs but not in muscle.

The protein resides in the synapse. Functionally, anchors the catalytic subunits of asymmetric AChE to the synaptic basal lamina. In Torpedo marmorata (Marbled electric ray), this protein is Acetylcholinesterase collagenic tail peptide.